A 366-amino-acid chain; its full sequence is Gelsolin-like protein 2 (366 aa).

Gelsolin-like repeat units follow at residues 55–139, 177–252, and 286–327; these read NFKV…DLFL, KHIV…HEFY, and KSTV…AQEK. An actin binding region spans residues 100–116; it reads KSTQDEYCVAAYKTVEL. An actin-actin interfilament contact point region spans residues 104–107; it reads DEYC.

This sequence belongs to the villin/gelsolin family. In terms of assembly, interacts with actin monomers and filaments. Expressed in circular and longitudinal muscle, pseudohearts, pharynx and gizzard. Not expressed in seminal vesicles.

The protein resides in the cytoplasm. It localises to the cytoskeleton. Its function is as follows. Calcium-regulated protein that binds to the plus (or barbed) ends of actin monomers or filaments, preventing monomer exchange (end-blocking or capping). Can promote the assembly of monomers into filaments (nucleation) as well as sever existing filaments. The chain is Gelsolin-like protein 2 from Lumbricus terrestris (Common earthworm).